The primary structure comprises 273 residues: 2-dehydro-3-deoxyphosphooctonate aldolase (273 aa).

Belongs to the KdsA family.

The protein localises to the cytoplasm. The enzyme catalyses D-arabinose 5-phosphate + phosphoenolpyruvate + H2O = 3-deoxy-alpha-D-manno-2-octulosonate-8-phosphate + phosphate. Its pathway is carbohydrate biosynthesis; 3-deoxy-D-manno-octulosonate biosynthesis; 3-deoxy-D-manno-octulosonate from D-ribulose 5-phosphate: step 2/3. The protein operates within bacterial outer membrane biogenesis; lipopolysaccharide biosynthesis. This chain is 2-dehydro-3-deoxyphosphooctonate aldolase, found in Desulfatibacillum aliphaticivorans.